The primary structure comprises 370 residues: Chorismate synthase (370 aa).

R48 serves as a coordination point for NADP(+). FMN contacts are provided by residues 125–127, 241–242, G286, 301–305, and R327; these read RSS, NA, and KPTSS.

The protein belongs to the chorismate synthase family. As to quaternary structure, homotetramer. FMNH2 is required as a cofactor.

The enzyme catalyses 5-O-(1-carboxyvinyl)-3-phosphoshikimate = chorismate + phosphate. Its pathway is metabolic intermediate biosynthesis; chorismate biosynthesis; chorismate from D-erythrose 4-phosphate and phosphoenolpyruvate: step 7/7. Functionally, catalyzes the anti-1,4-elimination of the C-3 phosphate and the C-6 proR hydrogen from 5-enolpyruvylshikimate-3-phosphate (EPSP) to yield chorismate, which is the branch point compound that serves as the starting substrate for the three terminal pathways of aromatic amino acid biosynthesis. This reaction introduces a second double bond into the aromatic ring system. The sequence is that of Chorismate synthase from Ruegeria sp. (strain TM1040) (Silicibacter sp.).